Consider the following 407-residue polypeptide: Phosphopentomutase (407 aa).

Mn(2+)-binding residues include D10, D306, H311, D347, H348, and H359.

This sequence belongs to the phosphopentomutase family. Requires Mn(2+) as cofactor.

Its subcellular location is the cytoplasm. It catalyses the reaction 2-deoxy-alpha-D-ribose 1-phosphate = 2-deoxy-D-ribose 5-phosphate. It carries out the reaction alpha-D-ribose 1-phosphate = D-ribose 5-phosphate. Its pathway is carbohydrate degradation; 2-deoxy-D-ribose 1-phosphate degradation; D-glyceraldehyde 3-phosphate and acetaldehyde from 2-deoxy-alpha-D-ribose 1-phosphate: step 1/2. Functionally, isomerase that catalyzes the conversion of deoxy-ribose 1-phosphate (dRib-1-P) and ribose 1-phosphate (Rib-1-P) to deoxy-ribose 5-phosphate (dRib-5-P) and ribose 5-phosphate (Rib-5-P), respectively. This is Phosphopentomutase from Salmonella schwarzengrund (strain CVM19633).